The sequence spans 1292 residues: Myosin-1 (1292 aa).

The region spanning 35 to 714 (VGVSDLTLLS…TLFALENMRD (680 aa)) is the Myosin motor domain. 128-135 (GESGAGKT) contributes to the ATP binding site. Serine 356 is modified (phosphoserine). Positions 403-485 (SIGILDIYGF…PGIFAALNDS (83 aa)) are actin-binding. IQ domains lie at 718–738 (HNMA…RIDS) and 739–764 (AIRI…YGNK). In terms of domain architecture, TH1 spans 770 to 960 (KERRAMSLLG…TIMVRRGRPG (191 aa)). Disordered regions lie at residues 956 to 991 (RGRP…GHPT), 1017 to 1180 (YSLN…FPLK), and 1227 to 1258 (PVAS…SAAT). Residues 1062 to 1081 (MDNSSAAYGNASALPNSAPS) show a composition bias toward polar residues. 2 stretches are compositionally biased toward pro residues: residues 1087–1121 (ASRP…PMPR) and 1142–1155 (APPP…PPAA). Positions 1157-1219 (PSEPVYEAAF…PTAYIVESKA (63 aa)) constitute an SH3 domain. The segment covering 1240-1258 (ATREAGTTSAATAAASAAT) has biased composition (low complexity).

Belongs to the TRAFAC class myosin-kinesin ATPase superfamily. Myosin family. Phosphorylation of the TEDS site (Ser-356) is required for the polarization of the actin cytoskeleton. Phosphorylation probably activates the myosin-I ATPase activity.

The protein resides in the cytoplasm. It is found in the cytoskeleton. Its subcellular location is the actin patch. Its function is as follows. Type-I myosin implicated in the organization of the actin cytoskeleton. Required for proper actin cytoskeleton polarization. At the cell cortex, assembles in patch-like structures together with proteins from the actin-polymerizing machinery and promotes actin assembly. Functions as actin nucleation-promoting factor (NPF) for the Arp2/3 complex. The polypeptide is Myosin-1 (MYO1) (Eremothecium gossypii (strain ATCC 10895 / CBS 109.51 / FGSC 9923 / NRRL Y-1056) (Yeast)).